The sequence spans 113 residues: Large ribosomal subunit protein bL17 (113 aa).

This sequence belongs to the bacterial ribosomal protein bL17 family. Part of the 50S ribosomal subunit. Contacts protein L32.

The chain is Large ribosomal subunit protein bL17 from Symbiobacterium thermophilum (strain DSM 24528 / JCM 14929 / IAM 14863 / T).